An 88-amino-acid chain; its full sequence is Alpha-latrotoxin-associated low molecular weight protein (88 aa).

The first 18 residues, 1–18 (MSKLFFVVFLCLIISVFA), serve as a signal peptide directing secretion.

This sequence belongs to the arthropod CHH/MIH/GIH/VIH hormone family. Expressed by the venom gland.

The protein resides in the secreted. Functionally, may increase the toxicity of alpha-latrotoxin and/or other venom components. Is non-toxic to mice and to the cockroach Periplaneta americana. In Latrodectus tredecimguttatus (Mediterranean black widow spider), this protein is Alpha-latrotoxin-associated low molecular weight protein.